Here is a 196-residue protein sequence, read N- to C-terminus: Phosphoheptose isomerase (196 aa).

Residues 34–192 (MVQCLLGGNK…CEIIDTTLFP (159 aa)) form the SIS domain. 49 to 51 (NGG) contacts substrate. His-58 and Gln-62 together coordinate Zn(2+). Residues Gln-62, 91-92 (ND), 117-119 (STS), Ser-122, and Gln-172 contribute to the substrate site. Gln-172 and His-180 together coordinate Zn(2+).

It belongs to the SIS family. GmhA subfamily. Homotetramer. It depends on Zn(2+) as a cofactor.

Its subcellular location is the cytoplasm. It catalyses the reaction 2 D-sedoheptulose 7-phosphate = D-glycero-alpha-D-manno-heptose 7-phosphate + D-glycero-beta-D-manno-heptose 7-phosphate. Its pathway is carbohydrate biosynthesis; D-glycero-D-manno-heptose 7-phosphate biosynthesis; D-glycero-alpha-D-manno-heptose 7-phosphate and D-glycero-beta-D-manno-heptose 7-phosphate from sedoheptulose 7-phosphate: step 1/1. Functionally, catalyzes the isomerization of sedoheptulose 7-phosphate in D-glycero-D-manno-heptose 7-phosphate. The polypeptide is Phosphoheptose isomerase (Colwellia psychrerythraea (strain 34H / ATCC BAA-681) (Vibrio psychroerythus)).